The sequence spans 253 residues: Peptidase inhibitor R3HDML (253 aa).

The first 24 residues, 1–24 (MPLLPSTVGLAGLLFWAGQAVNAL), serve as a signal peptide directing secretion. The propeptide occupies 25–56 (IMPNATPAPAQPESTAMRLLSGLEVPRYRRKR). The SCP domain occupies 67-207 (LDYHNHIRAS…HRAAYLVCNY (141 aa)). N120 is a glycosylation site (N-linked (GlcNAc...) asparagine).

Belongs to the CRISP family.

It localises to the secreted. In terms of biological role, putative serine protease inhibitor. The sequence is that of Peptidase inhibitor R3HDML (R3HDML) from Homo sapiens (Human).